A 447-amino-acid polypeptide reads, in one-letter code: Tubulin beta chain (447 aa).

The GTP site is built by Gln-11, Glu-69, Ser-138, Gly-142, Thr-143, Gly-144, Asn-204, and Asn-226. A Mg(2+)-binding site is contributed by Glu-69. A disordered region spans residues 424–447 (QYQEASVSDAEEEYDEEAPLEGEE). Residues 432-447 (DAEEEYDEEAPLEGEE) show a composition bias toward acidic residues.

It belongs to the tubulin family. Dimer of alpha and beta chains. A typical microtubule is a hollow water-filled tube with an outer diameter of 25 nm and an inner diameter of 15 nM. Alpha-beta heterodimers associate head-to-tail to form protofilaments running lengthwise along the microtubule wall with the beta-tubulin subunit facing the microtubule plus end conferring a structural polarity. Microtubules usually have 13 protofilaments but different protofilament numbers can be found in some organisms and specialized cells. Requires Mg(2+) as cofactor.

It is found in the cytoplasm. Its subcellular location is the cytoskeleton. Tubulin is the major constituent of microtubules, a cylinder consisting of laterally associated linear protofilaments composed of alpha- and beta-tubulin heterodimers. Microtubules grow by the addition of GTP-tubulin dimers to the microtubule end, where a stabilizing cap forms. Below the cap, tubulin dimers are in GDP-bound state, owing to GTPase activity of alpha-tubulin. The sequence is that of Tubulin beta chain (TUB1) from Zymoseptoria tritici (Speckled leaf blotch fungus).